The primary structure comprises 316 residues: Porphobilinogen deaminase (316 aa).

C249 is modified (S-(dipyrrolylmethanemethyl)cysteine).

This sequence belongs to the HMBS family. As to quaternary structure, monomer. Dipyrromethane serves as cofactor.

The catalysed reaction is 4 porphobilinogen + H2O = hydroxymethylbilane + 4 NH4(+). It participates in porphyrin-containing compound metabolism; protoporphyrin-IX biosynthesis; coproporphyrinogen-III from 5-aminolevulinate: step 2/4. Its function is as follows. Tetrapolymerization of the monopyrrole PBG into the hydroxymethylbilane pre-uroporphyrinogen in several discrete steps. The polypeptide is Porphobilinogen deaminase (Nitrobacter winogradskyi (strain ATCC 25391 / DSM 10237 / CIP 104748 / NCIMB 11846 / Nb-255)).